The primary structure comprises 161 residues: Pathogenesis-related protein 1 (161 aa).

Positions 1 to 26 (MNFTGYSRFLIVFVALVGALVLPSKA) are cleaved as a signal peptide. Residues 34–149 (LRVHNQARGA…NGGTIISCNY (116 aa)) form the SCP domain. Cystine bridges form between C70–C138, C113–C117, and C133–C147.

The protein belongs to the CRISP family.

Its subcellular location is the secreted. The protein localises to the extracellular space. The protein resides in the apoplast. In terms of biological role, partially responsible for acquired pathogen resistance. This Arabidopsis thaliana (Mouse-ear cress) protein is Pathogenesis-related protein 1.